The sequence spans 342 residues: viral G-protein coupled receptor (342 aa).

Over 1–51 (MAAEDFLTIFLDDDESWNETLNMSGYDYSGNFSLEVSVCEMTTVVPYTWNV) the chain is Extracellular. N-linked (GlcNAc...) asparagine; by host glycans are attached at residues N18, N22, and N31. The helical transmembrane segment at 52-72 (GILSLIFLINVLGNGLVTYIF) threads the bilayer. Topologically, residues 73–92 (CKHRSRAGAIDILLLGICLN) are cytoplasmic. A helical membrane pass occupies residues 93–113 (SLCLSISLLAEVLMFLFPNII). The Extracellular segment spans residues 114–121 (STGLCRLE). The helical transmembrane segment at 122–142 (IFFYYLYVYLDIFSVVCVSLV) threads the bilayer. The Cytoplasmic segment spans residues 143–159 (RYLLVAYSTRSWPKKQS). A helical transmembrane segment spans residues 160–180 (LGWVLTSAALLIALVLSGDAC). Over 181–217 (RHRSRVVDPVSKQAMCYENAGNMTADWRLHVRTVSVT) the chain is Extracellular. A helical transmembrane segment spans residues 218 to 238 (AGFLLPLALLILFYALTWCVV). At 239–251 (RRTKLQARRKVRG) the chain is on the cytoplasmic side. A helical transmembrane segment spans residues 252–272 (VIVAVVLLFFVFCFPYHVLNL). The Extracellular portion of the chain corresponds to 273 to 293 (LDTLLRRRWIRDSCYTRGLIN). The helical transmembrane segment at 294-314 (VGLAVTSLLQALYSAVVPLIY) threads the bilayer. The Cytoplasmic segment spans residues 315–342 (SCLGSLFRQRMYGLFQSLRQSFMSGATT).

Belongs to the G-protein coupled receptor 1 family. In terms of assembly, interacts with protein K7; this interaction promotes vGPCR proteasomal degradation. Interacts with host CADM1; this interaction is essential for chronic NF-kappa-B activation.

It is found in the host cell membrane. Functionally, receptor that signals constitutively via several signaling pathways including PI3K/AKT as well as mitogen- and stress-activated/MAP kinases. Promotes host cell proliferation and survival, modulates cell migration, stimulates angiogenesis, and recruits inflammatory cells, both in expressing cells and in neighboring cells. Maintains chronic activation of NF-kappa-B via interaction with host CADM1. This chain is viral G-protein coupled receptor (ORF74), found in Human herpesvirus 8 type P (isolate GK18) (HHV-8).